We begin with the raw amino-acid sequence, 634 residues long: Protein IcfG (634 aa).

The region spanning 306–361 (HHSTVPILDLTKASQAIAAGDLDYEININQGNRQDEIGILGNSFIYMKNQIKTLIA) is the HAMP domain. Positions 385–633 (PISLPDLQQW…DDITMIAVYR (249 aa)) constitute a PPM-type phosphatase domain.

In terms of biological role, involved in cross-regulation of inorganic carbon and glucose metabolisms. The sequence is that of Protein IcfG (icfG) from Synechocystis sp. (strain ATCC 27184 / PCC 6803 / Kazusa).